We begin with the raw amino-acid sequence, 404 residues long: RNA exonuclease 3 (404 aa).

Residues 1–17 (MNNNAQNKRSLDDSNGN) are compositionally biased toward polar residues. The segment at 1–29 (MNNNAQNKRSLDDSNGNDTKRPKQEDPKY) is disordered. The span at 18–28 (DTKRPKQEDPK) shows a compositional bias: basic and acidic residues. The Exonuclease domain occupies 241-389 (VLGIDCEMGF…EDSIAAIDIV (149 aa)).

Belongs to the REXO1/REXO3 family.

The protein resides in the cytoplasm. It is found in the nucleus. In terms of biological role, 3' to 5' exoribonuclease required for proper 3' end maturation of MRP RNA and of the U5L snRNA. The protein is RNA exonuclease 3 (REX3) of Candida albicans (strain SC5314 / ATCC MYA-2876) (Yeast).